Here is a 257-residue protein sequence, read N- to C-terminus: Acetylglutamate kinase (257 aa).

Substrate is bound by residues 43–44 (GG), Arg65, and Asn157. ATP-binding positions include 180-185 (DISGIL) and 208-210 (IIT).

This sequence belongs to the acetylglutamate kinase family. ArgB subfamily. As to quaternary structure, homodimer.

It localises to the cytoplasm. The enzyme catalyses N-acetyl-L-glutamate + ATP = N-acetyl-L-glutamyl 5-phosphate + ADP. Its pathway is amino-acid biosynthesis; L-arginine biosynthesis; N(2)-acetyl-L-ornithine from L-glutamate: step 2/4. Its function is as follows. Catalyzes the ATP-dependent phosphorylation of N-acetyl-L-glutamate. In Sodalis glossinidius (strain morsitans), this protein is Acetylglutamate kinase.